A 1383-amino-acid chain; its full sequence is Negative regulator of sporulation MDS3 (1383 aa).

3 Kelch repeats span residues 124–179, 199–246, and 356–402; these read CLYL…SPRF, GLFI…KDKE, and QNVV…WGGF. Residues 450 to 460 show a composition bias toward polar residues; the sequence is GRSNNRTSSFV. Disordered stretches follow at residues 450-506, 625-644, 653-825, 858-884, 1063-1114, 1251-1289, and 1321-1369; these read GRSN…VLDA, NQRL…DIPK, LLSS…DLFS, LDSF…SDES, NNSR…VDKE, QLKE…RLPQ, and SMTD…KSSS. Over residues 631 to 644 the composition is skewed to low complexity; the sequence is KSSNSESSSSDIPK. Residues 693–707 are compositionally biased toward basic and acidic residues; the sequence is VNREEGSDCSKDRKT. 3 stretches are compositionally biased toward low complexity: residues 726-758, 803-815, and 858-874; these read NSTS…EQIP, ESPF…SMSG, and LDSF…VSSV. Over residues 1084–1094 the composition is skewed to basic and acidic residues; sequence EGEKQEEIVSK. Residues 1251-1280 are compositionally biased toward low complexity; sequence QLKESQLQSKSSPIIPTVSTVTPSPLPSIS. Positions 1341–1352 are enriched in polar residues; the sequence is LQQTMLSRTPTN.

As to quaternary structure, interacts with SIT4.

It localises to the cytoplasm. Its function is as follows. Negatively regulates early sporulation-specific genes. TOR signaling pathway component that contributes to morphogenesis as a regulator of this key morphogenetic pathway. Required for growth and hyphal formation at pH 9, for full virulence in a mouse model of systemic infection and for biofilm formation. Involved in chlamydospore formation, distinctive morphological feature of the fungal pathogen C.albicans that can be induced to form in oxygen-limited environments and has been reported in clinical specimens. The protein is Negative regulator of sporulation MDS3 (MDS3) of Candida albicans (strain SC5314 / ATCC MYA-2876) (Yeast).